Here is a 275-residue protein sequence, read N- to C-terminus: Formamidopyrimidine-DNA glycosylase (275 aa).

P2 acts as the Schiff-base intermediate with DNA in catalysis. The active-site Proton donor is the E3. Residue K58 is the Proton donor; for beta-elimination activity of the active site. H93, R111, and R156 together coordinate DNA. Residues 241–275 form an FPG-type zinc finger; that stretch reads FVYDRAGEPCRVCGTPIRQIVQGQRSTYFCPTCQR. R265 functions as the Proton donor; for delta-elimination activity in the catalytic mechanism.

This sequence belongs to the FPG family. In terms of assembly, monomer. The cofactor is Zn(2+).

It carries out the reaction Hydrolysis of DNA containing ring-opened 7-methylguanine residues, releasing 2,6-diamino-4-hydroxy-5-(N-methyl)formamidopyrimidine.. It catalyses the reaction 2'-deoxyribonucleotide-(2'-deoxyribose 5'-phosphate)-2'-deoxyribonucleotide-DNA = a 3'-end 2'-deoxyribonucleotide-(2,3-dehydro-2,3-deoxyribose 5'-phosphate)-DNA + a 5'-end 5'-phospho-2'-deoxyribonucleoside-DNA + H(+). Functionally, involved in base excision repair of DNA damaged by oxidation or by mutagenic agents. Acts as a DNA glycosylase that recognizes and removes damaged bases. Has a preference for oxidized purines, such as 7,8-dihydro-8-oxoguanine (8-oxoG). Has AP (apurinic/apyrimidinic) lyase activity and introduces nicks in the DNA strand. Cleaves the DNA backbone by beta-delta elimination to generate a single-strand break at the site of the removed base with both 3'- and 5'-phosphates. In Burkholderia multivorans (strain ATCC 17616 / 249), this protein is Formamidopyrimidine-DNA glycosylase.